The primary structure comprises 156 residues: Small ribosomal subunit protein uS7 (156 aa).

The protein belongs to the universal ribosomal protein uS7 family. Part of the 30S ribosomal subunit. Contacts proteins S9 and S11.

In terms of biological role, one of the primary rRNA binding proteins, it binds directly to 16S rRNA where it nucleates assembly of the head domain of the 30S subunit. Is located at the subunit interface close to the decoding center, probably blocks exit of the E-site tRNA. This Agrobacterium fabrum (strain C58 / ATCC 33970) (Agrobacterium tumefaciens (strain C58)) protein is Small ribosomal subunit protein uS7.